A 92-amino-acid polypeptide reads, in one-letter code: Small ribosomal subunit protein uS19c (92 aa).

Belongs to the universal ribosomal protein uS19 family.

Its subcellular location is the plastid. The protein localises to the chloroplast. In terms of biological role, protein S19 forms a complex with S13 that binds strongly to the 16S ribosomal RNA. The sequence is that of Small ribosomal subunit protein uS19c (rps19) from Guillardia theta (Cryptophyte).